An 88-amino-acid polypeptide reads, in one-letter code: Acyl-CoA-binding domain-containing protein 7 (88 aa).

In terms of domain architecture, ACB spans 3–88 (LQADFDQAAQ…ARELIEKYGI (86 aa)). An acyl-CoA-binding positions include R15, 30 to 34 (YGLYK), K56, and Y75.

Belongs to the ACBD7 family.

Its function is as follows. Binds medium- and long-chain acyl-CoA esters. In Mus musculus (Mouse), this protein is Acyl-CoA-binding domain-containing protein 7 (Acbd7).